Here is a 620-residue protein sequence, read N- to C-terminus: Glutathione-regulated potassium-efflux system protein KefC (620 aa).

Transmembrane regions (helical) follow at residues 4–24 (HTLLQALIYLGSAALIVPIAV), 26–46 (LGLGSVLGYLIAGCIIGPWGL), 54–74 (SILHFAEIGVVLMLFVIGLEL), 90–110 (GALQMVVCGGLIGLFCMFLGL), 114–134 (VAELIGMTLALSSTAIAMQAM), 149–169 (FAVLLFQDIAAIPLVAMIPLL), 178–198 (LGAFALSALKVAGALALVVLL), 218–238 (VFSAVALFLVFGFGLLLEEVG), 270–290 (GLLLGLFFIGVGMSIDFGTLV), 294–314 (LRILLLLAGFLAIKIVMLWLV), 327–347 (WFAVLLGQGSEFAFVVFGAAQ), and 359–379 (ALTLAVALSMAATPIFLMLLT). An RCK N-terminal domain is found at 399 to 518 (QPRVIVAGFG…AGVAMPERET (120 aa)). Residues 599-620 (QGTAEGKHSGEAADEPEVKPSI) are disordered.

It belongs to the monovalent cation:proton antiporter 2 (CPA2) transporter (TC 2.A.37) family. KefC subfamily. In terms of assembly, homodimer. Interacts with the regulatory subunit KefF.

It localises to the cell inner membrane. Functionally, pore-forming subunit of a potassium efflux system that confers protection against electrophiles. Catalyzes K(+)/H(+) antiport. The sequence is that of Glutathione-regulated potassium-efflux system protein KefC from Salmonella heidelberg (strain SL476).